A 222-amino-acid chain; its full sequence is Glutathione S-transferase A4 (222 aa).

The residue at position 1 (methionine 1) is an N-acetylmethionine. One can recognise a GST N-terminal domain in the interval 3–83 (ARPKLHYPNG…YIADKHNLFG (81 aa)). Glutathione-binding positions include tyrosine 9, 54–55 (QV), and 67–68 (QT). Residues 85–208 (NLKERTLIDM…EPGSKKKPPP (124 aa)) form the GST C-terminal domain. Tyrosine 212 contributes to the substrate binding site.

Belongs to the GST superfamily. Alpha family. In terms of assembly, homodimer. In terms of tissue distribution, expressed at a high level in brain, placenta, and skeletal muscle and much lower in lung and liver.

Its subcellular location is the cytoplasm. It carries out the reaction RX + glutathione = an S-substituted glutathione + a halide anion + H(+). Its function is as follows. Conjugation of reduced glutathione to a wide number of exogenous and endogenous hydrophobic electrophiles. This isozyme has a high catalytic efficiency with 4-hydroxyalkenals such as 4-hydroxynonenal (4-HNE). In Homo sapiens (Human), this protein is Glutathione S-transferase A4 (GSTA4).